A 149-amino-acid polypeptide reads, in one-letter code: Putative pre-16S rRNA nuclease (149 aa).

The protein belongs to the YqgF nuclease family.

It is found in the cytoplasm. Its function is as follows. Could be a nuclease involved in processing of the 5'-end of pre-16S rRNA. The sequence is that of Putative pre-16S rRNA nuclease from Heliobacterium modesticaldum (strain ATCC 51547 / Ice1).